Consider the following 322-residue polypeptide: Lipoyl synthase (322 aa).

Residues methionine 1–glycine 12 show a composition bias toward polar residues. A disordered region spans residues methionine 1–arginine 22. [4Fe-4S] cluster contacts are provided by cysteine 60, cysteine 65, cysteine 71, cysteine 86, cysteine 90, cysteine 93, and serine 299. Residues tryptophan 72–leucine 288 enclose the Radical SAM core domain.

This sequence belongs to the radical SAM superfamily. Lipoyl synthase family. Requires [4Fe-4S] cluster as cofactor.

The protein resides in the cytoplasm. The enzyme catalyses [[Fe-S] cluster scaffold protein carrying a second [4Fe-4S](2+) cluster] + N(6)-octanoyl-L-lysyl-[protein] + 2 oxidized [2Fe-2S]-[ferredoxin] + 2 S-adenosyl-L-methionine + 4 H(+) = [[Fe-S] cluster scaffold protein] + N(6)-[(R)-dihydrolipoyl]-L-lysyl-[protein] + 4 Fe(3+) + 2 hydrogen sulfide + 2 5'-deoxyadenosine + 2 L-methionine + 2 reduced [2Fe-2S]-[ferredoxin]. The protein operates within protein modification; protein lipoylation via endogenous pathway; protein N(6)-(lipoyl)lysine from octanoyl-[acyl-carrier-protein]: step 2/2. Its function is as follows. Catalyzes the radical-mediated insertion of two sulfur atoms into the C-6 and C-8 positions of the octanoyl moiety bound to the lipoyl domains of lipoate-dependent enzymes, thereby converting the octanoylated domains into lipoylated derivatives. The sequence is that of Lipoyl synthase from Brucella abortus (strain S19).